The chain runs to 75 residues: MARFFRRRKFCRFTAEGVQEIDYKDVATLKNYITEAGKIVPSRITGTSAKYQRQLARAIKRSRYLALLPYTDKHQ.

It belongs to the bacterial ribosomal protein bS18 family. In terms of assembly, part of the 30S ribosomal subunit. Forms a tight heterodimer with protein bS6.

Functionally, binds as a heterodimer with protein bS6 to the central domain of the 16S rRNA, where it helps stabilize the platform of the 30S subunit. This chain is Small ribosomal subunit protein bS18, found in Vibrio atlanticus (strain LGP32) (Vibrio splendidus (strain Mel32)).